The chain runs to 279 residues: Putative pyruvate, phosphate dikinase regulatory protein (279 aa).

153–160 is an ADP binding site; the sequence is GISRTSKT.

It belongs to the pyruvate, phosphate/water dikinase regulatory protein family. PDRP subfamily.

The catalysed reaction is N(tele)-phospho-L-histidyl/L-threonyl-[pyruvate, phosphate dikinase] + ADP = N(tele)-phospho-L-histidyl/O-phospho-L-threonyl-[pyruvate, phosphate dikinase] + AMP + H(+). The enzyme catalyses N(tele)-phospho-L-histidyl/O-phospho-L-threonyl-[pyruvate, phosphate dikinase] + phosphate + H(+) = N(tele)-phospho-L-histidyl/L-threonyl-[pyruvate, phosphate dikinase] + diphosphate. In terms of biological role, bifunctional serine/threonine kinase and phosphorylase involved in the regulation of the pyruvate, phosphate dikinase (PPDK) by catalyzing its phosphorylation/dephosphorylation. The chain is Putative pyruvate, phosphate dikinase regulatory protein from Bartonella bacilliformis (strain ATCC 35685 / KC583 / Herrer 020/F12,63).